The sequence spans 199 residues: Inner membrane protein E199L (199 aa).

A helical membrane pass occupies residues 150–170 (INVMNHPFLTLILIILILIII).

Belongs to the asfivirus E199L family. In terms of assembly, interacts with host PYCR2; this interaction results in autophagy activation. Contains intramolecular disulfide bonds.

The protein localises to the virion membrane. It is found in the host membrane. Its function is as follows. Essential for viral fusion with host endosomal membrane and core release. Not required for virus morphogenesis and egress. Induces complete autophagy through the interaction with and down-regulation of host PYCR2. This chain is Inner membrane protein E199L, found in Ornithodoros (relapsing fever ticks).